The following is a 277-amino-acid chain: Bifunctional protein FolD 1 (277 aa).

Residues 162 to 164 (GDS) and Ser-187 contribute to the NADP(+) site.

This sequence belongs to the tetrahydrofolate dehydrogenase/cyclohydrolase family. Homodimer.

It catalyses the reaction (6R)-5,10-methylene-5,6,7,8-tetrahydrofolate + NADP(+) = (6R)-5,10-methenyltetrahydrofolate + NADPH. It carries out the reaction (6R)-5,10-methenyltetrahydrofolate + H2O = (6R)-10-formyltetrahydrofolate + H(+). It participates in one-carbon metabolism; tetrahydrofolate interconversion. Catalyzes the oxidation of 5,10-methylenetetrahydrofolate to 5,10-methenyltetrahydrofolate and then the hydrolysis of 5,10-methenyltetrahydrofolate to 10-formyltetrahydrofolate. This Syntrophomonas wolfei subsp. wolfei (strain DSM 2245B / Goettingen) protein is Bifunctional protein FolD 1.